The primary structure comprises 885 residues: Protein arg11, mitochondrial (885 aa).

The N-terminal 59 residues, 1-59 (MLIELQQIVKSGLVRNGAKHCTKRSLLCSNASVIASKRFQGSFAPGQQQPLNPLAKPIE), are a transit peptide targeting the mitochondrion. In terms of domain architecture, N-acetyltransferase spans 346–499 (FVINKHDSLD…SDKPFADAII (154 aa)). A compositionally biased stretch (low complexity) spans 503–523 (STKPPTASSTTNNPSSSQINQ). Residues 503–532 (STKPPTASSTTNNPSSSQINQKRSYSTSSL) are disordered. Residue Cys-703 is part of the active site.

This sequence in the N-terminal section; belongs to the acetylglutamate kinase family. The protein in the C-terminal section; belongs to the NAGSA dehydrogenase family. Post-translationally, the protein precursor is probably cleaved into the two biologically active enzymes, the kinase and the reductase.

It is found in the mitochondrion. It catalyses the reaction N-acetyl-L-glutamate 5-semialdehyde + phosphate + NADP(+) = N-acetyl-L-glutamyl 5-phosphate + NADPH + H(+). The enzyme catalyses N-acetyl-L-glutamate + ATP = N-acetyl-L-glutamyl 5-phosphate + ADP. The protein operates within amino-acid biosynthesis; L-arginine biosynthesis; N(2)-acetyl-L-ornithine from L-glutamate: step 2/4. Its pathway is amino-acid biosynthesis; L-arginine biosynthesis; N(2)-acetyl-L-ornithine from L-glutamate: step 3/4. Its activity is regulated as follows. The kinase activity is inhibited by arginine. The chain is Protein arg11, mitochondrial (arg11) from Schizosaccharomyces pombe (strain 972 / ATCC 24843) (Fission yeast).